Reading from the N-terminus, the 688-residue chain is Polyribonucleotide nucleotidyltransferase (688 aa).

D484 and D490 together coordinate Mg(2+). The region spanning 550–609 (PQTEIFNVAPDKIIEIIGQGGRVIKEIVEKFEVKIDLNTPSGEVKIMGNKERVLKTKEFI) is the KH domain. In terms of domain architecture, S1 motif spans 626 to 688 (DEVLEAQVKR…NKGKIALDLA (63 aa)).

Belongs to the polyribonucleotide nucleotidyltransferase family. Mg(2+) is required as a cofactor.

The protein resides in the cytoplasm. The enzyme catalyses RNA(n+1) + phosphate = RNA(n) + a ribonucleoside 5'-diphosphate. In terms of biological role, involved in mRNA degradation. Catalyzes the phosphorolysis of single-stranded polyribonucleotides processively in the 3'- to 5'-direction. This chain is Polyribonucleotide nucleotidyltransferase, found in Helicobacter pylori (strain J99 / ATCC 700824) (Campylobacter pylori J99).